The primary structure comprises 254 residues: Alcohol dehydrogenase (254 aa).

10 to 33 (FVAGLGGIGLETSREIVKSGPKNL) is a binding site for NAD(+). Ser138 lines the substrate pocket. The Proton acceptor role is filled by Tyr151.

This sequence belongs to the short-chain dehydrogenases/reductases (SDR) family. In terms of assembly, homodimer.

The enzyme catalyses a primary alcohol + NAD(+) = an aldehyde + NADH + H(+). It carries out the reaction a secondary alcohol + NAD(+) = a ketone + NADH + H(+). This chain is Alcohol dehydrogenase (Adh), found in Scaptomyza crassifemur (Fruit fly).